A 102-amino-acid chain; its full sequence is Co-chaperonin GroES (102 aa).

The protein belongs to the GroES chaperonin family. In terms of assembly, heptamer of 7 subunits arranged in a ring. Interacts with the chaperonin GroEL.

Its subcellular location is the cytoplasm. Together with the chaperonin GroEL, plays an essential role in assisting protein folding. The GroEL-GroES system forms a nano-cage that allows encapsulation of the non-native substrate proteins and provides a physical environment optimized to promote and accelerate protein folding. GroES binds to the apical surface of the GroEL ring, thereby capping the opening of the GroEL channel. This is Co-chaperonin GroES from Anabaena sp. (strain L31).